Consider the following 236-residue polypeptide: 2-C-methyl-D-erythritol 4-phosphate cytidylyltransferase (236 aa).

This sequence belongs to the IspD/TarI cytidylyltransferase family. IspD subfamily. As to quaternary structure, homodimer.

It catalyses the reaction 2-C-methyl-D-erythritol 4-phosphate + CTP + H(+) = 4-CDP-2-C-methyl-D-erythritol + diphosphate. Its pathway is isoprenoid biosynthesis; isopentenyl diphosphate biosynthesis via DXP pathway; isopentenyl diphosphate from 1-deoxy-D-xylulose 5-phosphate: step 2/6. Its function is as follows. Catalyzes the formation of 4-diphosphocytidyl-2-C-methyl-D-erythritol from CTP and 2-C-methyl-D-erythritol 4-phosphate (MEP). The polypeptide is 2-C-methyl-D-erythritol 4-phosphate cytidylyltransferase (Salmonella typhimurium (strain LT2 / SGSC1412 / ATCC 700720)).